Here is a 1182-residue protein sequence, read N- to C-terminus: Retrotransposable element SLACS 132 kDa protein (1182 aa).

4 disordered regions span residues 77–97 (GERS…PRER), 163–220 (DVLD…STDQ), 317–339 (RRKR…ALRL), and 418–478 (RTAR…STAP). The segment covering 163–174 (DVLDEEEQDDDL) has biased composition (acidic residues). The segment covering 420 to 446 (ARREQQQQRGKDNQEEEDRQKKEEKSL) has biased composition (basic and acidic residues). Polar residues predominate over residues 456–475 (SVRQGGQPSSSQPKRLNRWS). The Reverse transcriptase domain occupies 560-790 (NADVSMEVGR…TGDTGFGTAV (231 aa)).

It catalyses the reaction DNA(n) + a 2'-deoxyribonucleoside 5'-triphosphate = DNA(n+1) + diphosphate. The sequence is that of Retrotransposable element SLACS 132 kDa protein from Trypanosoma brucei gambiense.